The following is a 492-amino-acid chain: Catalase isozyme 1 (492 aa).

Residues histidine 65 and asparagine 138 contribute to the active site. Heme is bound at residue tyrosine 348.

The protein belongs to the catalase family. As to quaternary structure, homotetramer. Heme is required as a cofactor.

Its subcellular location is the peroxisome. It is found in the glyoxysome. It carries out the reaction 2 H2O2 = O2 + 2 H2O. Functionally, occurs in almost all aerobically respiring organisms and serves to protect cells from the toxic effects of hydrogen peroxide. The protein is Catalase isozyme 1 (CAT1) of Solanum tuberosum (Potato).